A 143-amino-acid chain; its full sequence is Putative pre-16S rRNA nuclease (143 aa).

It belongs to the YqgF nuclease family.

The protein localises to the cytoplasm. In terms of biological role, could be a nuclease involved in processing of the 5'-end of pre-16S rRNA. This is Putative pre-16S rRNA nuclease from Leuconostoc citreum (strain KM20).